Here is a 334-residue protein sequence, read N- to C-terminus: MGPVTGMTPDKNIETPAAEKVPGLSQTENMGSLPEEVGAARPKASMVDSGTTDEELTNLNWLHESTNLLNNFSLGSEGVPTGSPLYDIEGDLSPSGCQTPEKLSASSKPPYSFSLLIYMAIEHSPNKCLPVKDIYSWILDRFPYFATAPTGWKNSVRHNLSLNKYFQKVERSHGKVNGKGSLWCVDPEYKPSLIQALKKQPFSSALALYTPPTSPTSVSSRSSVSSLSSVEEVYEFIPKNSRAGSDGSEGFHSEDDTDIDYEEDMLGDSGYVSQPCINPSSNDLHGNKLRKEACQDIDDELKEAAGSLLHLAGIRTCLDSLLKTAKAQSQKHRK.

2 disordered regions span residues 1–52 and 83–108; these read MGPV…SGTT and SPLY…ASSK. The fork-head DNA-binding region spans 108–204; sequence KPPYSFSLLI…QALKKQPFSS (97 aa).

The protein localises to the nucleus. In Xenopus tropicalis (Western clawed frog), this protein is Forkhead box protein N2.